The sequence spans 501 residues: Putative glycogen synthase kinase-3 homolog (501 aa).

Residues 33-317 (YTDAKVVGNG…PLMGCAHPFF (285 aa)) form the Protein kinase domain. Residues 39 to 47 (VGNGSFGVV) and lysine 62 each bind ATP. The active-site Proton acceptor is aspartate 158. At tyrosine 193 the chain carries Phosphotyrosine. Disordered regions lie at residues 355-427 (LLPR…HVAV) and 446-501 (SYAV…EDEN). Over residues 381 to 390 (ESPRKTEDSQ) the composition is skewed to basic and acidic residues. Acidic residues-rich tracts occupy residues 451 to 471 (EDAE…DYDD) and 482 to 501 (DDMD…EDEN).

Belongs to the protein kinase superfamily. CMGC Ser/Thr protein kinase family. GSK-3 subfamily. Post-translationally, phosphorylation on Tyr-193 is necessary for the activity.

The catalysed reaction is L-seryl-[tau protein] + ATP = O-phospho-L-seryl-[tau protein] + ADP + H(+). It carries out the reaction L-threonyl-[tau protein] + ATP = O-phospho-L-threonyl-[tau protein] + ADP + H(+). The protein is Putative glycogen synthase kinase-3 homolog (gskt) of Drosophila melanogaster (Fruit fly).